The following is a 453-amino-acid chain: uncharacterized protein (453 aa).

2 disordered regions span residues 15–42 (LKRK…SETM) and 425–453 (TNEI…RHAK). Polar residues predominate over residues 425–437 (TNEISSSNNSGTA). Basic residues predominate over residues 443–453 (QNRKRNRRHAK).

This is an uncharacterized protein from Caenorhabditis elegans.